Consider the following 474-residue polypeptide: MADSASESDTDGAGGNSSSSAAMQSSCSSTSGGGGGGGGGGGGGKSGGIVISPFRLEELTNRLASLQQENKVLKIELETYKLKCKALQEENRDLRKASVTIQARAEQEEEFISNTLFKKIQALQKEKETLAVNYEKEEEFLTNELSRKLMQLQHEKAELEQHLEQEQEFQVNKLMKKIKKLENDTISKQLTLEQLRREKIDLENTLEQEQEALVNRLWKRMDKLEAEKRILQEKLDQPVSAPPSPRDISMEIDSPENMMRHIRFLKNEVERLKKQLRAAQLQHSEKMAQYLEEERHMREENLRLQRKLQREMERREALCRQLSESESSLEMDDERYFNEMSAQGLRPRTVSSPIPYTPSPSSSRPISPGLSYASHTVGFTPPTSLTRAGMSYYNSPGLHVQHMGTSHGITRPSPRRSNSPDKFKRPTPPPSPNTQTPVQPPPPPPPPPMQPTVPSAATSQPTPSQHSAHPSSQP.

The span at 1-10 (MADSASESDT) shows a compositional bias: acidic residues. The tract at residues 1-47 (MADSASESDTDGAGGNSSSSAAMQSSCSSTSGGGGGGGGGGGGGKSG) is disordered. A2 bears the N-acetylalanine mark. Residues 16–30 (NSSSSAAMQSSCSST) are compositionally biased toward low complexity. Positions 31–47 (SGGGGGGGGGGGGGKSG) are enriched in gly residues. Position 52 is a phosphoserine (S52). Residues 53 to 237 (PFRLEELTNR…KRILQEKLDQ (185 aa)) are a coiled coil. 3 tandem repeats follow at residues 106 to 134 (EQEE…AVNY), 135 to 163 (EKEE…EQHL), and 164 to 192 (EQEQ…QLTL). The interval 106-235 (EQEEEFISNT…AEKRILQEKL (130 aa)) is 5 X 29 AA tandem repeats. The 4; approximate repeat unit spans residues 193-206 (EQLRREKIDLENTL). Copy 5 of the repeat occupies 207-235 (EQEQEALVNRLWKRMDKLEAEKRILQEKL). Phosphoserine is present on residues S240, S244, S249, S254, S284, and S323. Residues 253-332 (DSPENMMRHI…SESESSLEMD (80 aa)) are a coiled coil. Residues 342-369 (AQGLRPRTVSSPIPYTPSPSSSRPISPG) form a disordered region. T349 is modified (phosphothreonine). The span at 351-368 (SSPIPYTPSPSSSRPISP) shows a compositional bias: low complexity. S363 and S367 each carry phosphoserine. Residue R387 is modified to Omega-N-methylarginine. Residues S395 and S413 each carry the phosphoserine modification. The disordered stretch occupies residues 397-474 (GLHVQHMGTS…QHSAHPSSQP (78 aa)). Residues 426-451 (PTPPPSPNTQTPVQPPPPPPPPPMQP) are compositionally biased toward pro residues. The short motif at 442-451 (PPPPPPPMQP) is the SH3-binding element. Low complexity predominate over residues 459–474 (SQPTPSQHSAHPSSQP).

As to expression, ubiquitously expressed.

It is found in the cytoplasm. The protein resides in the cytoskeleton. The sequence is that of Coiled-coil domain-containing protein 6 (CCDC6) from Homo sapiens (Human).